An 811-amino-acid polypeptide reads, in one-letter code: Protein VAC14 homolog (811 aa).

HEAT repeat units lie at residues 81 to 119 (DSYM…VAKG), 122 to 160 (FRYF…IVMQ), 240 to 278 (ISYL…EIQK), 334 to 372 (QIDY…IAPK), 375 to 412 (LLQI…LVSK), 431 to 469 (SVDF…RTGG), and 472 to 510 (INMH…SHKS). Positions 775–785 (TSASGITTTAS) are enriched in low complexity. The disordered stretch occupies residues 775 to 811 (TSASGITTTASNSRDSFITRLPPTAALSTGARKKPKQ).

The protein belongs to the VAC14 family. As to quaternary structure, component of the PI(3,5)P2 regulatory complex, composed of ATG18, FIG4, FAB1, VAC14 and VAC7. VAC14 nucleates the assembly of the complex and serves as a scaffold.

The protein localises to the cytoplasm. It localises to the vacuole membrane. Functionally, the PI(3,5)P2 regulatory complex regulates both the synthesis and turnover of phosphatidylinositol 3,5-bisphosphate (PtdIns(3,5)P2). Regulates the synthesis of PtdIns(3,5)P2 by positive activation of FAB1 and by controlling FIG4 localization. The protein is Protein VAC14 homolog of Schizosaccharomyces pombe (strain 972 / ATCC 24843) (Fission yeast).